The following is a 435-amino-acid chain: F-box/FBD/LRR-repeat protein At1g51370 (435 aa).

In terms of domain architecture, F-box spans 18-64; the sequence is EDRISQLPEPLISEILFHLSTKDSVRTSALSTKWRYLWQSVPGLDLD. 5 LRR repeats span residues 123-148, 170-195, 234-259, 262-287, and 314-340; these read VHCFHDNKIPLSIYTCTTLVHLRLRW, VSYPNETTLQKLISGSPVLEELILFS, AKMYSTKNFQIISSGFPAKLDIDFVN, GRYQKKKVIEDILIDISRVRDLVISS, and RFYISDLEMLPTLLESCPKLESLILEM. One can recognise an FBD domain in the interval 354–406; that stretch reads EPNVMVSTVPWCLVSSLKFVELKRSIPRYEGEMELVRYVLTNSTVLKKLRLNV.

This Arabidopsis thaliana (Mouse-ear cress) protein is F-box/FBD/LRR-repeat protein At1g51370.